Consider the following 150-residue polypeptide: Large ribosomal subunit protein bL9 (150 aa).

This sequence belongs to the bacterial ribosomal protein bL9 family.

Functionally, binds to the 23S rRNA. The polypeptide is Large ribosomal subunit protein bL9 (Streptococcus equi subsp. zooepidemicus (strain MGCS10565)).